A 350-amino-acid polypeptide reads, in one-letter code: uncharacterized protein (350 aa).

Positions 1–27 are cleaved as a signal peptide; the sequence is MKNKKRVLIASSLSCAILLLSAATTQA. A disordered region spans residues 28-71; the sequence is NSAHKDSQDQNKKEHVDKSQQKEKRNVTNKDKNSTVPDDIGKNG. The segment covering 30-60 has biased composition (basic and acidic residues); it reads AHKDSQDQNKKEHVDKSQQKEKRNVTNKDKN.

This sequence belongs to the aerolysin family.

This is an uncharacterized protein from Staphylococcus aureus (strain MSSA476).